Reading from the N-terminus, the 205-residue chain is Protein N-terminal glutamine amidohydrolase (205 aa).

Catalysis depends on residues Cys20, His74, and Asp90.

This sequence belongs to the NTAQ1 family. Monomer.

The catalysed reaction is N-terminal L-glutaminyl-[protein] + H2O = N-terminal L-glutamyl-[protein] + NH4(+). Mediates the side-chain deamidation of N-terminal glutamine residues to glutamate, an important step in N-end rule pathway of protein degradation. Conversion of the resulting N-terminal glutamine to glutamate renders the protein susceptible to arginylation, polyubiquitination and degradation as specified by the N-end rule. Does not act on substrates with internal or C-terminal glutamine and does not act on non-glutamine residues in any position. The sequence is that of Protein N-terminal glutamine amidohydrolase (tun) from Drosophila mojavensis (Fruit fly).